The primary structure comprises 448 residues: Homogentisate 1,2-dioxygenase (448 aa).

Catalysis depends on histidine 303, which acts as the Proton acceptor. Residues histidine 346 and glutamate 352 each contribute to the Fe cation site. Positions 361 and 382 each coordinate homogentisate. Histidine 382 is a binding site for Fe cation.

The protein belongs to the homogentisate dioxygenase family. Hexamer; dimer of trimers. The cofactor is Fe cation.

It catalyses the reaction homogentisate + O2 = 4-maleylacetoacetate + H(+). It participates in amino-acid degradation; L-phenylalanine degradation; acetoacetate and fumarate from L-phenylalanine: step 4/6. Its function is as follows. Involved in the catabolism of homogentisate (2,5-dihydroxyphenylacetate or 2,5-OH-PhAc), a central intermediate in the degradation of phenylalanine and tyrosine. Catalyzes the oxidative ring cleavage of the aromatic ring of homogentisate to yield maleylacetoacetate. The chain is Homogentisate 1,2-dioxygenase from Bradyrhizobium diazoefficiens (strain JCM 10833 / BCRC 13528 / IAM 13628 / NBRC 14792 / USDA 110).